Consider the following 272-residue polypeptide: Phosphate import ATP-binding protein PstB (272 aa).

Positions 20-267 (VKKEVVYETN…PADQRTADYI (248 aa)) constitute an ABC transporter domain. 58–65 (GPSGCGKS) contacts ATP.

Belongs to the ABC transporter superfamily. Phosphate importer (TC 3.A.1.7) family. In terms of assembly, the complex is composed of two ATP-binding proteins (PstB), two transmembrane proteins (PstC and PstA) and a solute-binding protein (PstS).

It is found in the cell membrane. The enzyme catalyses phosphate(out) + ATP + H2O = ADP + 2 phosphate(in) + H(+). Its function is as follows. Part of the ABC transporter complex PstSACB involved in phosphate import. Responsible for energy coupling to the transport system. The protein is Phosphate import ATP-binding protein PstB of Geobacillus kaustophilus (strain HTA426).